Reading from the N-terminus, the 490-residue chain is AP-5 complex subunit mu-1 (490 aa).

Residues 206–476 (KPQVSISITE…LISSDYYIWN (271 aa)) form the MHD domain.

This sequence belongs to the adaptor complexes medium subunit family. In terms of assembly, probably part of the adaptor protein complex 5 (AP-5) a tetramer composed of AP5B1, AP5M1, AP5S1 and AP5Z1.

The protein localises to the cytoplasm. Its subcellular location is the cytosol. It localises to the late endosome membrane. The protein resides in the lysosome membrane. As part of AP-5, a probable fifth adaptor protein complex it may be involved in endosomal transport. The chain is AP-5 complex subunit mu-1 (AP5M1) from Macaca fascicularis (Crab-eating macaque).